An 867-amino-acid chain; its full sequence is Glucans biosynthesis glucosyltransferase H (867 aa).

Residues 71 to 91 (DDEGRTQLETMPKATRSSISP) form a disordered region. 6 helical membrane-spanning segments follow: residues 139–156 (YILLLLTFSQTALATWYM), 194–216 (ILILFAILFCWISAGFWTALMGF), 518–540 (VMSYLSAPLWFMFLALSTALQVV), 568–590 (IALLASTMVLLFLPKLLSILLIW), 603–625 (VTISLLLEVILSVLLAPVRMLFH), and 680–702 (FLFWLAPIVFSLILSPFVSVFSS).

The protein belongs to the glycosyltransferase 2 family. OpgH subfamily.

The protein resides in the cell inner membrane. It participates in glycan metabolism; osmoregulated periplasmic glucan (OPG) biosynthesis. Its function is as follows. Involved in the biosynthesis of osmoregulated periplasmic glucans (OPGs). The chain is Glucans biosynthesis glucosyltransferase H from Nitrosomonas europaea (strain ATCC 19718 / CIP 103999 / KCTC 2705 / NBRC 14298).